The sequence spans 94 residues: C-X-C motif chemokine 11 (94 aa).

The N-terminal stretch at 1 to 21 is a signal peptide; sequence MSVKGMAIALAVILCATVVQG. Arginine 27 is subject to Citrulline; by PAD2. 2 disulfides stabilise this stretch: cysteine 30–cysteine 57 and cysteine 32–cysteine 74.

As to quaternary structure, interacts with TNFAIP6 (via Link domain). As to expression, high levels in peripheral blood leukocytes, pancreas and liver astrocytes. Moderate levels in thymus, spleen and lung. Low levels in placenta, prostate and small intestine. Also found in epidermal basal layer keratinocytes in skin disorders.

It is found in the secreted. Its function is as follows. Chemotactic for interleukin-activated T-cells but not unstimulated T-cells, neutrophils or monocytes. Induces calcium release in activated T-cells. Binds to CXCR3. May play an important role in CNS diseases which involve T-cell recruitment. May play a role in skin immune responses. The polypeptide is C-X-C motif chemokine 11 (CXCL11) (Homo sapiens (Human)).